Reading from the N-terminus, the 323-residue chain is 4-hydroxyphenylpyruvate 3-dimethylallyltransferase (323 aa).

Substrate contacts are provided by Arg160 and Glu281.

This sequence belongs to the aromatic prenyltransferase family. Monomer.

The protein localises to the cytoplasm. The enzyme catalyses 3-(4-hydroxyphenyl)pyruvate + dimethylallyl diphosphate = 3-dimethylallyl-4-hydroxyphenylpyruvate + diphosphate. The protein operates within antibiotic biosynthesis; novobiocin biosynthesis. Magnesium-independent aromatic prenyltransferase that catalyzes the irreversible transfer of a dimethylallyl group to 4-hydroxyphenylpyruvate to produce the ring A structure in the novobiocin biosynthesis pathway. Novobiocin is an aminocoumarin family antibiotic that targets bacterial DNA gyrases. It is able to prenylate many different compounds, including the phenylpropanoids 4-coumarate and caffeate, the plant polyketide resveratrol, the (iso)flavonoid naringenin, apigenin, daidzein and genistein, and the dihydroxynaphthalenes 1,6-DHN and 2,7-DHN. This is 4-hydroxyphenylpyruvate 3-dimethylallyltransferase from Streptomyces niveus (Streptomyces spheroides).